Consider the following 161-residue polypeptide: SsrA-binding protein (161 aa).

The tract at residues 1–23 (MATKKNEQIKGRTDGLVAENRRS) is disordered.

Belongs to the SmpB family.

It localises to the cytoplasm. In terms of biological role, required for rescue of stalled ribosomes mediated by trans-translation. Binds to transfer-messenger RNA (tmRNA), required for stable association of tmRNA with ribosomes. tmRNA and SmpB together mimic tRNA shape, replacing the anticodon stem-loop with SmpB. tmRNA is encoded by the ssrA gene; the 2 termini fold to resemble tRNA(Ala) and it encodes a 'tag peptide', a short internal open reading frame. During trans-translation Ala-aminoacylated tmRNA acts like a tRNA, entering the A-site of stalled ribosomes, displacing the stalled mRNA. The ribosome then switches to translate the ORF on the tmRNA; the nascent peptide is terminated with the 'tag peptide' encoded by the tmRNA and targeted for degradation. The ribosome is freed to recommence translation, which seems to be the essential function of trans-translation. In Hyphomonas neptunium (strain ATCC 15444), this protein is SsrA-binding protein.